We begin with the raw amino-acid sequence, 144 residues long: Large ribosomal subunit protein uL15 (144 aa).

The segment at 1–53 (MRLNTLSPAEGAKHSAKRLGRGIGSGLGKTGGRGHKGQKSRTGGGVRRGFEGG) is disordered. A compositionally biased stretch (gly residues) spans 21-31 (RGIGSGLGKTG).

The protein belongs to the universal ribosomal protein uL15 family. In terms of assembly, part of the 50S ribosomal subunit.

Its function is as follows. Binds to the 23S rRNA. This chain is Large ribosomal subunit protein uL15, found in Pasteurella multocida (strain Pm70).